The sequence spans 459 residues: ADP-specific phosphofructokinase (459 aa).

The ADPK domain occupies 1–457; sequence MMEFLKDFQK…FASYLSLLKR (457 aa). Residues E268, E298, and D441 each coordinate Mg(2+). The active-site Proton acceptor is D441.

The protein belongs to the carbohydrate kinase PfkC family. The cofactor is Mg(2+).

Its subcellular location is the cytoplasm. The catalysed reaction is beta-D-fructose 6-phosphate + ADP = beta-D-fructose 1,6-bisphosphate + AMP + H(+). Its pathway is carbohydrate degradation; glycolysis. Functionally, catalyzes the phosphorylation of fructose 6-phosphate to fructose 1,6-bisphosphate using ADP as the phosphate donor. The protein is ADP-specific phosphofructokinase of Thermococcus litoralis.